Consider the following 418-residue polypeptide: tRNA(Met) cytidine acetate ligase (418 aa).

Glycine 95, asparagine 161, and arginine 186 together coordinate ATP.

This sequence belongs to the TmcAL family.

Its subcellular location is the cytoplasm. It carries out the reaction cytidine(34) in elongator tRNA(Met) + acetate + ATP = N(4)-acetylcytidine(34) in elongator tRNA(Met) + AMP + diphosphate. Its function is as follows. Catalyzes the formation of N(4)-acetylcytidine (ac(4)C) at the wobble position of elongator tRNA(Met), using acetate and ATP as substrates. First activates an acetate ion to form acetyladenylate (Ac-AMP) and then transfers the acetyl group to tRNA to form ac(4)C34. In Thermotoga maritima (strain ATCC 43589 / DSM 3109 / JCM 10099 / NBRC 100826 / MSB8), this protein is tRNA(Met) cytidine acetate ligase.